A 102-amino-acid polypeptide reads, in one-letter code: DET1- and DDB1-associated protein 1 (102 aa).

A2 carries the post-translational modification N-acetylalanine. Phosphoserine is present on residues S33 and S95. Positions 67-102 (NAAKKRDQEQVEAEGESSAPPRKVARTDSPDMPEDT) are disordered.

This sequence belongs to the DDA1 family. Component of numerous DCX (DDB1-CUL4-X-box) E3 ubiquitin-protein ligase complexes which consist of a core of DDB1, cullin-4 (CUL4A or CUL4B), DDA1 and RBX1. Component of the DCX(DCAF15) complex, also named CLR4(DCAF15) complex, composed of DCAF15, DDB1, cullin-4 (CUL4A or CUL4B), DDA1 and RBX1. Part of the DDD core complex containing DET1, DDA1 and DDB1; the DDD core complex recruits a specific UBE2E enzyme, such as UBE2E1, UBE2E2 UBE2E3, to form specific DDD-E2 complexes.

The protein operates within protein modification; protein ubiquitination. In terms of biological role, functions as a component of numerous distinct DCX (DDB1-CUL4-X-box) E3 ubiquitin-protein ligase complexes which mediate the ubiquitination and subsequent proteasomal degradation of target proteins. In the DCX complexes, acts as a scaffolding subunit required to stabilize the complex. The sequence is that of DET1- and DDB1-associated protein 1 from Mus musculus (Mouse).